Reading from the N-terminus, the 438-residue chain is UDP-N-acetylmuramoylalanine--D-glutamate ligase (438 aa).

G112–T118 provides a ligand contact to ATP.

The protein belongs to the MurCDEF family.

The protein localises to the cytoplasm. The enzyme catalyses UDP-N-acetyl-alpha-D-muramoyl-L-alanine + D-glutamate + ATP = UDP-N-acetyl-alpha-D-muramoyl-L-alanyl-D-glutamate + ADP + phosphate + H(+). Its pathway is cell wall biogenesis; peptidoglycan biosynthesis. In terms of biological role, cell wall formation. Catalyzes the addition of glutamate to the nucleotide precursor UDP-N-acetylmuramoyl-L-alanine (UMA). This chain is UDP-N-acetylmuramoylalanine--D-glutamate ligase, found in Escherichia coli O6:K15:H31 (strain 536 / UPEC).